We begin with the raw amino-acid sequence, 156 residues long: ATP synthase subunit b (156 aa).

A helical membrane pass occupies residues 11-31 (LIAFALFVWFCMKFVWPPIIN).

This sequence belongs to the ATPase B chain family. As to quaternary structure, F-type ATPases have 2 components, F(1) - the catalytic core - and F(0) - the membrane proton channel. F(1) has five subunits: alpha(3), beta(3), gamma(1), delta(1), epsilon(1). F(0) has three main subunits: a(1), b(2) and c(10-14). The alpha and beta chains form an alternating ring which encloses part of the gamma chain. F(1) is attached to F(0) by a central stalk formed by the gamma and epsilon chains, while a peripheral stalk is formed by the delta and b chains.

The protein localises to the cell inner membrane. In terms of biological role, f(1)F(0) ATP synthase produces ATP from ADP in the presence of a proton or sodium gradient. F-type ATPases consist of two structural domains, F(1) containing the extramembraneous catalytic core and F(0) containing the membrane proton channel, linked together by a central stalk and a peripheral stalk. During catalysis, ATP synthesis in the catalytic domain of F(1) is coupled via a rotary mechanism of the central stalk subunits to proton translocation. Its function is as follows. Component of the F(0) channel, it forms part of the peripheral stalk, linking F(1) to F(0). In Haemophilus influenzae (strain PittGG), this protein is ATP synthase subunit b.